Here is a 515-residue protein sequence, read N- to C-terminus: N-fatty-acyl-amino acid synthase/hydrolase PM20D1.1 (515 aa).

The first 34 residues, 1–34, serve as a signal peptide directing secretion; it reads MKTKFTKKTVLKFFGILFAILLLSVLILFSVVIG. Asparagine 50, asparagine 87, and asparagine 118 each carry an N-linked (GlcNAc...) asparagine glycan. Position 140 (histidine 140) interacts with Zn(2+). Aspartate 142 is an active-site residue. Residue aspartate 173 coordinates Zn(2+). Glutamate 207 serves as the catalytic Proton acceptor. Residues glutamate 208, aspartate 234, and histidine 480 each contribute to the Zn(2+) site.

The protein belongs to the peptidase M20A family. Zn(2+) serves as cofactor.

The protein localises to the secreted. The catalysed reaction is an N-acyl-L-amino acid + H2O = an L-alpha-amino acid + a carboxylate. It carries out the reaction an N-acyl-aromatic L-alpha-amino acid + H2O = an aromatic L-alpha-amino acid + a carboxylate. The enzyme catalyses N-(5Z,8Z,11Z,14Z)-eicosatetraenoyl-glycine + H2O = (5Z,8Z,11Z,14Z)-eicosatetraenoate + glycine. It catalyses the reaction N-hexadecanoyl-L-phenylalanine + H2O = hexadecanoate + L-phenylalanine. The catalysed reaction is N-octadecanoyl-L-phenylalanine + H2O = octadecanoate + L-phenylalanine. It carries out the reaction N-(4Z,7Z,10Z,13Z,16Z,19Z-docosahexaenoyl)-L-phenylalanine + H2O = (4Z,7Z,10Z,13Z,16Z,19Z)-docosahexaenoate + L-phenylalanine. The enzyme catalyses N-(9Z-octadecenoyl)-L-asparagine + H2O = L-asparagine + (9Z)-octadecenoate. It catalyses the reaction (9Z)-octadecenoate + glycine = N-(9Z-octadecenoyl)glycine + H2O. The catalysed reaction is N-(9Z-octadecenoyl)-L-lysine + H2O = L-lysine + (9Z)-octadecenoate. It carries out the reaction N-(9Z-octadecenoyl)-L-methionine + H2O = (9Z)-octadecenoate + L-methionine. The enzyme catalyses N-(9Z-octadecenoyl)-L-serine + H2O = L-serine + (9Z)-octadecenoate. It catalyses the reaction N-(9Z-octadecenoyl)-L-tryptophan + H2O = L-tryptophan + (9Z)-octadecenoate. The catalysed reaction is N-(9Z-octadecenoyl)-L-tyrosine + H2O = L-tyrosine + (9Z)-octadecenoate. It carries out the reaction N-(9Z-octadecenoyl)-L-glutamine + H2O = L-glutamine + (9Z)-octadecenoate. The enzyme catalyses N-(5Z,8Z,11Z,14Z-eicosatetraenoyl)-L-serine + H2O = (5Z,8Z,11Z,14Z)-eicosatetraenoate + L-serine. It catalyses the reaction (5Z,8Z,11Z,14Z)-eicosatetraenoate + L-phenylalanine = N-(5Z,8Z,11Z,14Z-eicosatetraenoyl)-L-phenylalanine + H2O. The catalysed reaction is N-(9Z-octadecenoyl)-L-leucine + H2O = L-leucine + (9Z)-octadecenoate. It carries out the reaction L-phenylalanine + (9Z)-octadecenoate = N-(9Z-octadecenoyl)-L-phenylalanine + H2O. Its pathway is amino-acid metabolism. The protein operates within energy metabolism; electron transfer. It participates in lipid metabolism; fatty acid metabolism. Its activity is regulated as follows. Lipoproteins are powerful coactivators of PM20D1 activity in vitro and NAA biosynthesis in vivo. Its function is as follows. Secreted enzyme that regulates the endogenous N-fatty acyl amino acid (NAAs) tissue and circulating levels by functioning as a bidirectional NAA synthase/hydrolase. It condenses free fatty acids and free amino acids to generate NAAs and bidirectionally catalyzes the reverse hydrolysis reaction. Some of these NAAs stimulate oxidative metabolism via mitochondrial uncoupling, increasing energy expenditure in a UPC1-independent manner. Thereby, this secreted protein may indirectly regulate whole body energy expenditure. PM20D1 circulates in tight association with both low- and high-density (LDL and HDL,respectively) lipoprotein particles. This Danio rerio (Zebrafish) protein is N-fatty-acyl-amino acid synthase/hydrolase PM20D1.1.